Consider the following 347-residue polypeptide: Protein-glutamate methylesterase/protein-glutamine glutaminase 4 (347 aa).

The Response regulatory domain maps to 3–121 (KVLIVDDSAS…HPNHEREARS (119 aa)). 4-aspartylphosphate is present on Asp-54. The CheB-type methylesterase domain occupies 157–342 (PARLKAVAIG…PDRIVTALTS (186 aa)). Catalysis depends on residues Ser-168, His-195, and Asp-289.

The protein belongs to the CheB family. Post-translationally, phosphorylated by CheA. Phosphorylation of the N-terminal regulatory domain activates the methylesterase activity.

The protein localises to the cytoplasm. The enzyme catalyses [protein]-L-glutamate 5-O-methyl ester + H2O = L-glutamyl-[protein] + methanol + H(+). The catalysed reaction is L-glutaminyl-[protein] + H2O = L-glutamyl-[protein] + NH4(+). In terms of biological role, involved in chemotaxis. Part of a chemotaxis signal transduction system that modulates chemotaxis in response to various stimuli. Catalyzes the demethylation of specific methylglutamate residues introduced into the chemoreceptors (methyl-accepting chemotaxis proteins or MCP) by CheR. Also mediates the irreversible deamidation of specific glutamine residues to glutamic acid. This is Protein-glutamate methylesterase/protein-glutamine glutaminase 4 from Geobacter metallireducens (strain ATCC 53774 / DSM 7210 / GS-15).